We begin with the raw amino-acid sequence, 411 residues long: MITLIKNIQELLQVRQTSISKVSGAEMAELPTIKNAFLVIKDDLIADFGSMENLPEIKADSIINASGRVVLPAWCDSHTHIVYAGNREQEFVDRINGFTYEEIANRGGGILNSAKKLNETSEEEIYEQSKIRLEEVMRLGTGAVEIKSGYGLTVEGELKMLRVIKKLAENYPISIKATFLGAHAFPTHYKENKAGYIDEIITKMLPEIAQNKLADYVDVFCESGYFSVEETEKIMQAGIDFGLKPKIHVNQFNSIGGIQSGVKFNALSVDHLEIMNPEDIEALKGTETMPVALPSCSYFLSIPYTPAREMIKAGLPLALATDFNPGSTPSGNMNFVVATACIKMKMTPEEAINAATINGAYAMGLSETHGSITKGKKANLIITKPISSYYQIPYAFGSNLIEDVLIDGQII.

Fe(3+) is bound by residues His78 and His80. 2 residues coordinate Zn(2+): His78 and His80. Positions 87, 150, and 183 each coordinate 4-imidazolone-5-propanoate. Residue Tyr150 participates in N-formimidoyl-L-glutamate binding. His248 is a binding site for Fe(3+). His248 contributes to the Zn(2+) binding site. 4-imidazolone-5-propanoate is bound at residue Gln251. Position 322 (Asp322) interacts with Fe(3+). Asp322 is a binding site for Zn(2+). N-formimidoyl-L-glutamate contacts are provided by Asn324 and Gly326. 4-imidazolone-5-propanoate is bound at residue Ser327.

The protein belongs to the metallo-dependent hydrolases superfamily. HutI family. It depends on Zn(2+) as a cofactor. Requires Fe(3+) as cofactor.

It is found in the cytoplasm. The enzyme catalyses 4-imidazolone-5-propanoate + H2O = N-formimidoyl-L-glutamate. It functions in the pathway amino-acid degradation; L-histidine degradation into L-glutamate; N-formimidoyl-L-glutamate from L-histidine: step 3/3. Catalyzes the hydrolytic cleavage of the carbon-nitrogen bond in imidazolone-5-propanoate to yield N-formimidoyl-L-glutamate. It is the third step in the universal histidine degradation pathway. The polypeptide is Imidazolonepropionase (Flavobacterium johnsoniae (strain ATCC 17061 / DSM 2064 / JCM 8514 / BCRC 14874 / CCUG 350202 / NBRC 14942 / NCIMB 11054 / UW101) (Cytophaga johnsonae)).